Reading from the N-terminus, the 526-residue chain is Ribonuclease Y (526 aa).

Residues 10–30 (ITFILLIVVGALGGALVGYFI) form a helical membrane-spanning segment. The KH domain occupies 216–279 (TVTVVEIPNE…EVAKRALTIL (64 aa)). The 94-residue stretch at 342–435 (VLKHSIEVAF…VAAADALSAA (94 aa)) folds into the HD domain.

Belongs to the RNase Y family.

Its subcellular location is the cell membrane. In terms of biological role, endoribonuclease that initiates mRNA decay. This chain is Ribonuclease Y, found in Acholeplasma laidlawii (strain PG-8A).